The primary structure comprises 172 residues: Centrin-2 (172 aa).

The span at 1 to 14 shows a compositional bias: polar residues; sequence MASNFKKTTMASSA. A disordered region spans residues 1–31; it reads MASNFKKTTMASSAQRKRMSPKPELTEDQKQ. Ala2 is modified (N-acetylalanine). Positions 2–25 are required for self-assembly; sequence ASNFKKTTMASSAQRKRMSPKPEL. Ser20 bears the Phosphoserine mark. Lys22 is covalently cross-linked (Glycyl lysine isopeptide (Lys-Gly) (interchain with G-Cter in SUMO2)). Residue Thr26 is modified to Phosphothreonine. EF-hand domains are found at residues 28 to 63, 64 to 99, 101 to 136, and 137 to 172; these read DQKQEIREAFDLFDADGTGTIDIKELKVAMRALGFE, PKKEEIKKMISEIDKEGTGKMNFSDFLTVMTQKMSE, DTKEEILKAFKLFDDDETGKISFKNLKRVAKELGEN, and LTDEELQEMIDEADRDGDGEVNEQEFLRIMKKTSLY. Ca(2+) is bound by residues Asp41, Asp43, Thr45, Thr47, and Glu52. The Ca(2+) site is built by Asp150, Asp152, Asp154, Glu156, and Glu161.

Belongs to the centrin family. As to quaternary structure, monomer. Homooligomer. Interacts with CCP110, SFI1. Component of the XPC complex composed of XPC, RAD23B and CETN2. Component of the nuclear pore complex (NPC)-associated TREX-2 complex (transcription and export complex 2), composed of at least GANP, 2 copies of ENY2, PCID2, SEM1/DSS1, and either centrin CETN2 or centrin CETN3. The TREX-2 complex also associates with ALYREF/ALY and with the nucleoporin NUP153. Interacts with USP49. Forms a microtubule-associated complex with POC5, POC1B and FAM161A. Interacts with CCDC15. Ubiquitously expressed in all adult tissues tested, with strongest expression in brain, spleen, kidney, small intestine and ovary. Also expressed in the NIH 3T3 fibroblast cell line and peripheral blood lymphocytes.

It is found in the cytoplasm. It localises to the cytoskeleton. Its subcellular location is the microtubule organizing center. The protein resides in the centrosome. The protein localises to the centriole. It is found in the nucleus. It localises to the nucleus envelope. Its subcellular location is the nuclear pore complex. Functionally, plays a fundamental role in microtubule organizing center structure and function. Required for centriole duplication and correct spindle formation. Has a role in regulating cytokinesis and genome stability via cooperation with CALM1 and CCP110. Involved in global genome nucleotide excision repair (GG-NER) by acting as component of the XPC complex. Cooperatively with Rad23b appears to stabilize Xpc. In vitro, stimulates DNA binding of the Xpc:Rad23b dimer. Its function is as follows. The XPC complex is proposed to represent the first factor bound at the sites of DNA damage and together with other core recognition factors, Xpa, RPA and the TFIIH complex, is part of the pre-incision (or initial recognition) complex. The XPC complex recognizes a wide spectrum of damaged DNA characterized by distortions of the DNA helix such as single-stranded loops, mismatched bubbles or single-stranded overhangs. The orientation of XPC complex binding appears to be crucial for inducing a productive NER. XPC complex is proposed to recognize and to interact with unpaired bases on the undamaged DNA strand which is followed by recruitment of the TFIIH complex and subsequent scanning for lesions in the opposite strand in a 5'-to-3' direction by the NER machinery. Cyclobutane pyrimidine dimers (CPDs) which are formed upon UV-induced DNA damage esacpe detection by the XPC complex due to a low degree of structural perurbation. Instead they are detected by the UV-DDB complex which in turn recruits and cooperates with the XPC complex in the respective DNA repair. In terms of biological role, as a component of the TREX-2 complex, involved in the export of mRNAs to the cytoplasm through the nuclear pores. The sequence is that of Centrin-2 (Cetn2) from Mus musculus (Mouse).